The following is a 181-amino-acid chain: Large ribosomal subunit protein uL5 (181 aa).

It belongs to the universal ribosomal protein uL5 family. In terms of assembly, part of the 50S ribosomal subunit; part of the 5S rRNA/L5/L18/L25 subcomplex. Contacts the 5S rRNA and the P site tRNA. Forms a bridge to the 30S subunit in the 70S ribosome.

Its function is as follows. This is one of the proteins that bind and probably mediate the attachment of the 5S RNA into the large ribosomal subunit, where it forms part of the central protuberance. In the 70S ribosome it contacts protein S13 of the 30S subunit (bridge B1b), connecting the 2 subunits; this bridge is implicated in subunit movement. Contacts the P site tRNA; the 5S rRNA and some of its associated proteins might help stabilize positioning of ribosome-bound tRNAs. This Onion yellows phytoplasma (strain OY-M) protein is Large ribosomal subunit protein uL5.